We begin with the raw amino-acid sequence, 339 residues long: Polyhydroxybutyrate depolymerase (339 aa).

The N-terminal stretch at 1–20 (MFDSVKIAWLVALGAAQVAA) is a signal peptide. Residue Ser39 is part of the active site. A disulfide bond links Cys70 and Cys79. The active site involves Asp121. An N-linked (GlcNAc...) asparagine glycan is attached at Asn144. His155 is a catalytic residue. Cystine bridges form between Cys169-Cys180, Cys234-Cys241, and Cys250-Cys304. Trp307 contacts (3R)-hydroxybutanoate trimer.

The protein belongs to the carbohydrate esterase 1 (CE1) family.

Its subcellular location is the secreted. It catalyses the reaction [(3R)-hydroxybutanoate](n) + H2O = [(3R)-hydroxybutanoate](n-1) + (R)-3-hydroxybutanoate + H(+). Its activity is regulated as follows. The enzyme is completely inhibited by dithiothreitol (DTT) and diisopropylfluorophosphate (DFP), and partially inhibited by HgCl(2) and by enzyme3-(p-nitrophenoxy)propane (EPNP). Activity is not affected by N-ethylmaleimide (NEM) or phenylmethylsulfonyl fluoride (PMSF). In terms of biological role, esterase involved in the hydrolysis of polyhydroxybutyrate, a microbial polyester that can be produced from renewable resources. This Talaromyces funiculosus (Fruitlet core rot fungus) protein is Polyhydroxybutyrate depolymerase.